The sequence spans 140 residues: Putative septation protein SpoVG (140 aa).

The disordered stretch occupies residues 88-127 (VAPQAGGLQGAEEPTAVEPAPQLQDESELPWEPGDDGEGA). Over residues 112-124 (DESELPWEPGDDG) the composition is skewed to acidic residues.

This sequence belongs to the SpoVG family.

Could be involved in septation. The polypeptide is Putative septation protein SpoVG (Symbiobacterium thermophilum (strain DSM 24528 / JCM 14929 / IAM 14863 / T)).